The chain runs to 240 residues: Proteasome subunit beta 1 (240 aa).

A propeptide spans 1–46 (removed in mature form; by autocatalysis); it reads MRDMTPGPDLSGPQAADEFQSDPYAPEVGELPEQSAQDSEKVNKTG. Residues 1–48 form a disordered region; the sequence is MRDMTPGPDLSGPQAADEFQSDPYAPEVGELPEQSAQDSEKVNKTGTT. T47 acts as the Nucleophile in catalysis.

It belongs to the peptidase T1B family. In terms of assembly, the 20S proteasome core is composed of 14 alpha and 14 beta subunits that assemble into four stacked heptameric rings, resulting in a barrel-shaped structure. The two inner rings, each composed of seven catalytic beta subunits, are sandwiched by two outer rings, each composed of seven alpha subunits. The catalytic chamber with the active sites is on the inside of the barrel. Has a gated structure, the ends of the cylinder being occluded by the N-termini of the alpha-subunits. Is capped at one or both ends by the proteasome regulatory ATPase, PAN.

Its subcellular location is the cytoplasm. It carries out the reaction Cleavage of peptide bonds with very broad specificity.. The formation of the proteasomal ATPase PAN-20S proteasome complex, via the docking of the C-termini of PAN into the intersubunit pockets in the alpha-rings, triggers opening of the gate for substrate entry. Interconversion between the open-gate and close-gate conformations leads to a dynamic regulation of the 20S proteasome proteolysis activity. Component of the proteasome core, a large protease complex with broad specificity involved in protein degradation. The chain is Proteasome subunit beta 1 from Haloarcula marismortui (strain ATCC 43049 / DSM 3752 / JCM 8966 / VKM B-1809) (Halobacterium marismortui).